The following is a 1773-amino-acid chain: Plexin-2 (1773 aa).

The first 19 residues, 1-19, serve as a signal peptide directing secretion; the sequence is MLFIESAFLVLTSLSAAEA. The Sema domain occupies 20-436; sequence ATPFEGGVKQ…MPYGIVMEEL (417 aa). Residues 20 to 1130 lie on the Extracellular side of the membrane; sequence ATPFEGGVKQ…SDHALPSRLS (1111 aa). A glycan (N-linked (GlcNAc...) asparagine) is linked at N65. 9 cysteine pairs are disulfide-bonded: C83–C90, C117–C125, C239–C341, C255–C292, C310–C328, C439–C456, C445–C479, C448–C465, and C459–C471. N241 is a glycosylation site (N-linked (GlcNAc...) asparagine). The PSI 1 domain occupies 438 to 480; sequence TCAHHESCTDCQVSVDPLCQWCHPTQSCTTSSRCSGPLTTQCP. Residue N494 is glycosylated (N-linked (GlcNAc...) asparagine). A disulfide bridge connects residues C516 and C538. N566 is a glycosylation site (N-linked (GlcNAc...) asparagine). The PSI 2 domain occupies 571 to 608; it reads DCAGYSTCSTCMSSEFGCQWCSHKCSSSCGSASAKACV. Residues N670 and N693 are each glycosylated (N-linked (GlcNAc...) asparagine). Residues 698–739 form the PSI 3 domain; sequence SCSNLAADCSSCLALSPSLSCGWCNRKCSHECHESKATAVCD. 3 consecutive IPT/TIG domains span residues 741–829, 831–916, and 919–1006; these read PKID…FSFV, VSIF…FEYR, and PSVN…FLMD. N855, N877, N975, and N1007 each carry an N-linked (GlcNAc...) asparagine glycan. Residues 1131–1151 form a helical membrane-spanning segment; that stretch reads FLILGLLLFTVITLIVMCLIF. A coiled-coil region spans residues 1150–1188; that stretch reads IFKRRRQEREKEYRKIQLQMENLENNVRKECKQAFAELQ. The Cytoplasmic portion of the chain corresponds to 1152–1764; that stretch reads KRRRQEREKE…LHVCLETDNH (613 aa).

The protein belongs to the plexin family. In terms of assembly, interacts with mab-20.

Its subcellular location is the cell membrane. Involved as a receptor for mab-20/sema-2a in the formation or stabilization of cell-cell contacts at several stages of epithelial morphogenesis. In early embryonic development, required for proper ventral closure of the epidermis. During male tail morphogenesis, involved in precursor cell sorting and in the formation of distinct sensory rays. Involved in axon guidance of SDQL neurons during neurogenesis. The polypeptide is Plexin-2 (plx-2) (Caenorhabditis briggsae).